The chain runs to 240 residues: Tetrahydromethanopterin S-methyltransferase subunit A (240 aa).

Residues 1-218 are Cytoplasmic-facing; sequence MVDKKEPASG…KFHSGVHAGK (218 aa). Histidine 85 contributes to the 5-hydroxybenzimidazolylcob(I)amide binding site. Residues 219–239 form a helical membrane-spanning segment; sequence IEGAMIGLTVTISLLGLLLLG. Residue arginine 240 is a topological domain, extracellular.

This sequence belongs to the MtrA family. As to quaternary structure, the complex is composed of 8 subunits; MtrA, MtrB, MtrC, MtrD, MtrE, MtrF, MtrG and MtrH. 5-hydroxybenzimidazolylcob(I)amide serves as cofactor.

The protein resides in the cell membrane. The catalysed reaction is 5-methyl-5,6,7,8-tetrahydromethanopterin + coenzyme M + 2 Na(+)(in) = 5,6,7,8-tetrahydromethanopterin + methyl-coenzyme M + 2 Na(+)(out). Its pathway is one-carbon metabolism; methanogenesis from CO(2); methyl-coenzyme M from 5,10-methylene-5,6,7,8-tetrahydromethanopterin: step 2/2. In terms of biological role, part of a complex that catalyzes the formation of methyl-coenzyme M and tetrahydromethanopterin from coenzyme M and methyl-tetrahydromethanopterin. This is an energy-conserving, sodium-ion translocating step. This chain is Tetrahydromethanopterin S-methyltransferase subunit A, found in Methanosarcina acetivorans (strain ATCC 35395 / DSM 2834 / JCM 12185 / C2A).